Consider the following 254-residue polypeptide: Trans-aconitate 2-methyltransferase (254 aa).

It belongs to the methyltransferase superfamily. Tam family.

It localises to the cytoplasm. The enzyme catalyses trans-aconitate + S-adenosyl-L-methionine = (E)-3-(methoxycarbonyl)pent-2-enedioate + S-adenosyl-L-homocysteine. Functionally, catalyzes the S-adenosylmethionine monomethyl esterification of trans-aconitate. The chain is Trans-aconitate 2-methyltransferase from Rhodococcus jostii (strain RHA1).